Here is a 197-residue protein sequence, read N- to C-terminus: Outer-membrane lipoprotein LolB (197 aa).

The first 20 residues, 1–20 (MNRSRRLALFCLGAPLLLQA), serve as a signal peptide directing secretion. C21 carries the N-palmitoyl cysteine lipid modification. C21 carries S-diacylglycerol cysteine lipidation.

It belongs to the LolB family. As to quaternary structure, monomer.

The protein localises to the cell outer membrane. Functionally, plays a critical role in the incorporation of lipoproteins in the outer membrane after they are released by the LolA protein. The sequence is that of Outer-membrane lipoprotein LolB from Cupriavidus necator (strain ATCC 17699 / DSM 428 / KCTC 22496 / NCIMB 10442 / H16 / Stanier 337) (Ralstonia eutropha).